The following is a 263-amino-acid chain: Microtubule-associated protein RP/EB family member 1 (263 aa).

Residues 14-116 enclose the Calponin-homology (CH) domain; that stretch reads NLSRHDMLAW…FVQWFKKFFD (103 aa). A disordered region spans residues 150-182; sequence KPLGTGSAGPQRPIVAQRTPATPKGGTGMVKKA. The EB1 C-terminal domain maps to 180-250; the sequence is KKAAGDDESA…LYATDEGFVI (71 aa).

It belongs to the MAPRE family.

Its subcellular location is the cytoplasm. It localises to the cytoskeleton. It is found in the microtubule organizing center. The protein resides in the centrosome. The protein localises to the golgi apparatus. Its subcellular location is the spindle. It localises to the spindle pole. In terms of biological role, plus-end tracking protein (+TIP) that binds to the plus-end of microtubules and regulates the dynamics of the microtubule cytoskeleton. Promotes cytoplasmic microtubule nucleation and elongation. Involved in mitotic spindle positioning by stabilizing microtubules and promoting dynamic connection between astral microtubules and the cortex during mitotic chromosome segregation. The polypeptide is Microtubule-associated protein RP/EB family member 1 (MAPRE1) (Coturnix japonica (Japanese quail)).